Reading from the N-terminus, the 443-residue chain is ATP-dependent protease ATPase subunit HslU (443 aa).

ATP-binding positions include Ile18, 60–65 (GVGKTE), Asp256, Glu321, and Arg393.

The protein belongs to the ClpX chaperone family. HslU subfamily. A double ring-shaped homohexamer of HslV is capped on each side by a ring-shaped HslU homohexamer. The assembly of the HslU/HslV complex is dependent on binding of ATP.

It is found in the cytoplasm. Its function is as follows. ATPase subunit of a proteasome-like degradation complex; this subunit has chaperone activity. The binding of ATP and its subsequent hydrolysis by HslU are essential for unfolding of protein substrates subsequently hydrolyzed by HslV. HslU recognizes the N-terminal part of its protein substrates and unfolds these before they are guided to HslV for hydrolysis. This Pectobacterium atrosepticum (strain SCRI 1043 / ATCC BAA-672) (Erwinia carotovora subsp. atroseptica) protein is ATP-dependent protease ATPase subunit HslU.